The primary structure comprises 705 residues: Elongation factor G (705 aa).

In terms of domain architecture, tr-type G spans 8-294 (NLYRNFGIMA…AVIDYLPSPL (287 aa)). GTP-binding positions include 17–24 (AHIDAGKT), 92–96 (DTPGH), and 146–149 (NKMD).

Belongs to the TRAFAC class translation factor GTPase superfamily. Classic translation factor GTPase family. EF-G/EF-2 subfamily.

The protein localises to the cytoplasm. Its function is as follows. Catalyzes the GTP-dependent ribosomal translocation step during translation elongation. During this step, the ribosome changes from the pre-translocational (PRE) to the post-translocational (POST) state as the newly formed A-site-bound peptidyl-tRNA and P-site-bound deacylated tRNA move to the P and E sites, respectively. Catalyzes the coordinated movement of the two tRNA molecules, the mRNA and conformational changes in the ribosome. This is Elongation factor G from Ruegeria pomeroyi (strain ATCC 700808 / DSM 15171 / DSS-3) (Silicibacter pomeroyi).